The sequence spans 635 residues: Transcription termination factor FttA (635 aa).

KHa regions lie at residues 1-69 and 4-69; these read MSAE…PSVL and EDIL…PSVL. Residues 70–137 form a KHb region; that stretch reads VEPDIAKDKI…WAPKPVRTPP (68 aa). Metallo-beta-lactamase N-terminus stretches follow at residues 179–382 and 179–383; these read WVRT…YGGY and WVRT…GGYD. 2 beta-Casp regions span residues 180 to 577 and 383 to 576; these read VRTS…GFSG and DDVL…EGFS. Residues H241, H243, D245, H246, H328, and D351 each contribute to the Zn(2+) site. Metallo-beta-lactamase C-terminus regions lie at residues 577–635 and 578–635; these read GHSD…IRLR and HSDR…IRLR. H602 lines the Zn(2+) pocket.

The protein belongs to the metallo-beta-lactamase superfamily. RNA-metabolizing metallo-beta-lactamase-like family. FttA subfamily. In terms of assembly, homodimer. Interacts with RNA polymerase (RNAP); interaction is not dependent on DNA or RNA. Interacts with the Spt4-Spt5 complex. It depends on Zn(2+) as a cofactor.

Its subcellular location is the chromosome. Its function is as follows. Terminates transcription on the whole genome. Termination is linked to FttA-mediated RNA cleavage and does not require NTP hydrolysis. Cleaves endonucleolytically at the RNA exit channel of RNA polymerase (RNAP); the 5'-3' exonuclease activity of this protein degrades the nascent RNA released from RNAP. Terminates transcription genome-wide. Transcription termination is most effective in vivo on RNAs with more than one U4-tract in their 3'-ends (including non-protein coding RNAs); U4-tracts are recognized by this protein. Also plays a role in termination of RNAs without U-tracts by an unknown mechanism. Has endonuclease activity after U-rich tracts in transcription termination sites. Binds RNA at U4-tracts found directly upstream of the experimentally determined transcription termination sites; binds preferentially to RNAs with more U4-tracts at their 3'-ends. This is Transcription termination factor FttA from Methanococcus maripaludis (strain DSM 14266 / JCM 13030 / NBRC 101832 / S2 / LL).